Reading from the N-terminus, the 37-residue chain is Large ribosomal subunit protein bL36 (37 aa).

Belongs to the bacterial ribosomal protein bL36 family.

This chain is Large ribosomal subunit protein bL36 (rpmJ), found in Mycoplasma sp.